Consider the following 512-residue polypeptide: Maturase K (512 aa).

The protein belongs to the intron maturase 2 family. MatK subfamily.

Its subcellular location is the plastid. It is found in the chloroplast. Functionally, usually encoded in the trnK tRNA gene intron. Probably assists in splicing its own and other chloroplast group II introns. This is Maturase K from Oenothera biennis (German evening primrose).